A 362-amino-acid chain; its full sequence is Innexin-17 (362 aa).

Helical transmembrane passes span 27–47 (YFTVFLLTSSAFFIMAKQYVG), 101–121 (WVPFILFGLAVVIYIPRVIWN), 189–209 (FLATILIFISMGFLDYFMGLG), and 266–286 (LFIALWWWYALLAILSIFDIF).

It belongs to the pannexin family.

Its subcellular location is the cell membrane. The protein resides in the cell junction. It localises to the gap junction. Structural component of the gap junctions. This chain is Innexin-17, found in Caenorhabditis elegans.